The chain runs to 401 residues: Subtilisin-like protease 7 (401 aa).

A signal peptide spans M1–G20. Residues A21 to N119 constitute a propeptide that is removed on maturation. Positions K36–I118 constitute an Inhibitor I9 domain. N58 is a glycosylation site (N-linked (GlcNAc...) asparagine). The region spanning S129–M401 is the Peptidase S8 domain. Catalysis depends on charge relay system residues D161 and H193. N-linked (GlcNAc...) asparagine glycosylation is found at N223 and N253. Catalysis depends on S347, which acts as the Charge relay system. An N-linked (GlcNAc...) asparagine glycan is attached at N397.

Belongs to the peptidase S8 family.

Its subcellular location is the secreted. In terms of biological role, secreted subtilisin-like serine protease with keratinolytic activity that contributes to pathogenicity. The chain is Subtilisin-like protease 7 (SUB7) from Trichophyton tonsurans (Scalp ringworm fungus).